Here is a 310-residue protein sequence, read N- to C-terminus: Elongation factor Ts, mitochondrial (310 aa).

A mitochondrion-targeting transit peptide spans 1 to 42 (MGFQVLRSVIQAPLAKRSFLCKSCPSGLRVLYNNILLSSRSY).

Belongs to the EF-Ts family.

Its subcellular location is the mitochondrion. Associates with the EF-Tu.GDP complex and induces the exchange of GDP to GTP. It remains bound to the aminoacyl-tRNA.EF-Tu.GTP complex up to the GTP hydrolysis stage on the ribosome. The polypeptide is Elongation factor Ts, mitochondrial (tsf1) (Schizosaccharomyces japonicus (strain yFS275 / FY16936) (Fission yeast)).